Consider the following 323-residue polypeptide: Ribose 1,5-bisphosphate isomerase (323 aa).

Residues 22-25 (RGAA) and arginine 65 each bind substrate. Cysteine 130 functions as the Proton acceptor in the catalytic mechanism. Aspartate 199 acts as the Proton donor in catalysis. Substrate contacts are provided by residues 209–210 (NK) and lysine 235. A Glycyl lysine isopeptide (Lys-Gly) (interchain with G-Cter in SAMP2) cross-link involves residue lysine 210.

The protein belongs to the eIF-2B alpha/beta/delta subunits family. R15P isomerase subfamily.

The enzyme catalyses alpha-D-ribose 1,5-bisphosphate = D-ribulose 1,5-bisphosphate. In terms of biological role, catalyzes the isomerization of ribose 1,5-bisphosphate (R15P) to ribulose 1,5-bisphosphate (RuBP), the CO(2) acceptor and substrate for RubisCO. Functions in an archaeal AMP degradation pathway, together with AMP phosphorylase and RubisCO. This is Ribose 1,5-bisphosphate isomerase from Haloferax volcanii (strain ATCC 29605 / DSM 3757 / JCM 8879 / NBRC 14742 / NCIMB 2012 / VKM B-1768 / DS2) (Halobacterium volcanii).